A 525-amino-acid chain; its full sequence is Putative EGF-like domain-containing protein R659 (525 aa).

The signal sequence occupies residues 1–24; that stretch reads MGNKWCGIFLTILLLAQMSQTIFG. Asn60, Asn77, Asn171, Asn181, Asn268, and Asn281 each carry an N-linked (GlcNAc...) asparagine; by host glycan. Positions 317–359 constitute an EGF-like domain; sequence LTQGCGNCDSNAECVFVSGSNSIVPKYQCKCKSGYVGNGTHCS. 3 cysteine pairs are disulfide-bonded: Cys321–Cys330, Cys324–Cys345, and Cys347–Cys358. Asn354 and Asn411 each carry an N-linked (GlcNAc...) asparagine; by host glycan.

Its subcellular location is the secreted. This chain is Putative EGF-like domain-containing protein R659, found in Acanthamoeba polyphaga (Amoeba).